We begin with the raw amino-acid sequence, 447 residues long: N-succinylarginine dihydrolase (447 aa).

Substrate-binding positions include 19 to 28, Asn-110, and 137 to 138; these read AGLSFGNEAS and HR. The active site involves Glu-174. Substrate is bound at residue Arg-212. His-248 is an active-site residue. Positions 250 and 359 each coordinate substrate. Cys-365 serves as the catalytic Nucleophile.

Belongs to the succinylarginine dihydrolase family. As to quaternary structure, homodimer.

The enzyme catalyses N(2)-succinyl-L-arginine + 2 H2O + 2 H(+) = N(2)-succinyl-L-ornithine + 2 NH4(+) + CO2. The protein operates within amino-acid degradation; L-arginine degradation via AST pathway; L-glutamate and succinate from L-arginine: step 2/5. In terms of biological role, catalyzes the hydrolysis of N(2)-succinylarginine into N(2)-succinylornithine, ammonia and CO(2). The protein is N-succinylarginine dihydrolase of Shigella boydii serotype 4 (strain Sb227).